The primary structure comprises 413 residues: Sporulation-specific protein 74 (413 aa).

Residues 1-87 form a disordered region; sequence MGAGTLLNGL…SEHTDDFNDG (87 aa). Basic and acidic residues predominate over residues 69-83; it reads HENKDIHERSEHTDD.

Interacts with itself. Interacts with MPC54, NUD1 and SPO21/MPC70.

Its subcellular location is the cytoplasm. It is found in the cytoskeleton. The protein localises to the microtubule organizing center. The protein resides in the spindle pole body. Functionally, involved in the pathway that organizes the shaping and sizing of the prospore membrane (PSM) during sporulation. Probable component of a core structural unit of the scaffold that initiates synthesis of the prospore membrane. In Saccharomyces cerevisiae (strain ATCC 204508 / S288c) (Baker's yeast), this protein is Sporulation-specific protein 74 (SPO74).